A 673-amino-acid chain; its full sequence is Methionine--tRNA ligase (673 aa).

Positions 15–25 match the 'HIGH' region motif; sequence PYANGPIHLGH. The Zn(2+) site is built by Cys146, Cys149, Cys159, and Cys162. Positions 332-336 match the 'KMSKS' region motif; the sequence is KMSKS. Lys335 lines the ATP pocket. Positions 572-673 constitute a tRNA-binding domain; sequence DFAKLDLRIA…EGAQPGMRVK (102 aa).

Belongs to the class-I aminoacyl-tRNA synthetase family. MetG type 1 subfamily. As to quaternary structure, homodimer. Zn(2+) is required as a cofactor.

The protein localises to the cytoplasm. It carries out the reaction tRNA(Met) + L-methionine + ATP = L-methionyl-tRNA(Met) + AMP + diphosphate. Its function is as follows. Is required not only for elongation of protein synthesis but also for the initiation of all mRNA translation through initiator tRNA(fMet) aminoacylation. The polypeptide is Methionine--tRNA ligase (Shewanella loihica (strain ATCC BAA-1088 / PV-4)).